Here is a 561-residue protein sequence, read N- to C-terminus: Shugoshin 1 (561 aa).

The interval 1–176 is necessary for interaction with PPP2CA and PPP2R1A; sequence MAKERCLKKS…DTLGVDFDSG (176 aa). A coiled-coil region spans residues 7 to 89; it reads LKKSFQDSLE…DIILQLRKEC (83 aa). Residue S14 is modified to Phosphoserine; by NEK2. The D-box 1 signature appears at 192 to 200; the sequence is RSSLKKHCN. S256 bears the Phosphoserine mark. Disordered regions lie at residues 260–331 and 348–441; these read IQPG…SVSS and FRQK…HLSL. Over residues 267 to 296 the composition is skewed to basic and acidic residues; the sequence is KTKEDILESKSEQTKSKQRDTQERKREEKR. Residues 273–313 adopt a coiled-coil conformation; sequence LESKSEQTKSKQRDTQERKREEKRKANRRKSKRMSKYKENK. The segment covering 297 to 307 has biased composition (basic residues); the sequence is KANRRKSKRMS. Basic and acidic residues predominate over residues 308-318; sequence KYKENKSENKK. Positions 310–312 match the KEN box motif; sequence KEN. A compositionally biased stretch (low complexity) spans 364–375; that stretch reads SEVSLCESSGSG. Over residues 388-398 the composition is skewed to polar residues; the sequence is YIQNPTSNSDR. Residues 410–421 show a composition bias toward basic and acidic residues; that stretch reads KYTDEKETEGSK. Over residues 422–433 the composition is skewed to low complexity; it reads PTKTPTTTPPET. Residue S436 is modified to Phosphoserine. The short motif at 438–446 is the D-box 2 element; that stretch reads HLSLKDITN. A PXVXL/I motif motif is present at residues 451–455; the sequence is PVVKI. The D-box 3 motif lies at 457-465; that stretch reads RLSLSPKKN. The residue at position 507 (S507) is a Phosphoserine; by NEK2.

This sequence belongs to the shugoshin family. Interacts with PPP2CA (or PPP2CB), PPP2R1B, PPP2R5A, PPP2R5B, PPP2R5C, PPP2R5D, PPP2R5E, SET, LRRC59, RBM10 (or RBM5), RPL10A, RPL28, RPL7, RPL7A and RPLP1. Interaction with protein phosphatase 2A occurs most probably through direct binding to the regulatory B56 subunits: PPP2R1B, PPP2R5A, PPP2R5B, PPP2R5C, PPP2R5D, PPP2R5E. Interacts with PPP2R1A and NEK2. Isoform 3 interacts with PLK1. Interacts with CDCA8. Ubiquitinated and degraded during mitotic exit by APC/C-Cdh1. Post-translationally, phosphorylation by NEK2 is essential for chromosome congression in mitosis and for the proper attachment of spindle microtubule to the kinetochore. Phosphorylated by PLK1 and AUKRB. In terms of tissue distribution, widely expressed. Highly expressed in testis. Expressed in lung, small intestine, breast, liver and placenta. Strongly overexpressed in 90% of breast cancers tested.

The protein localises to the nucleus. It localises to the chromosome. The protein resides in the centromere. Its subcellular location is the kinetochore. It is found in the cytoplasm. The protein localises to the cytoskeleton. It localises to the spindle pole. The protein resides in the microtubule organizing center. Its subcellular location is the centrosome. It is found in the nucleus speckle. Its function is as follows. Plays a central role in chromosome cohesion during mitosis by preventing premature dissociation of cohesin complex from centromeres after prophase, when most of cohesin complex dissociates from chromosomes arms. May act by preventing phosphorylation of the STAG2 subunit of cohesin complex at the centromere, ensuring cohesin persistence at centromere until cohesin cleavage by ESPL1/separase at anaphase. Essential for proper chromosome segregation during mitosis and this function requires interaction with PPP2R1A. Its phosphorylated form is necessary for chromosome congression and for the proper attachment of spindle microtubule to the kinetochore. Necessary for kinetochore localization of PLK1 and CENPF. May play a role in the tension sensing mechanism of the spindle-assembly checkpoint by regulating PLK1 kinetochore affinity. Isoform 3 plays a role in maintaining centriole cohesion involved in controlling spindle pole integrity. Involved in centromeric enrichment of AUKRB in prometaphase. The polypeptide is Shugoshin 1 (Homo sapiens (Human)).